The following is a 223-amino-acid chain: UPF0319 protein VPA1584 (223 aa).

Residues 1–21 form the signal peptide; sequence MKLIKPLTCALALAMSGMAFA.

The protein belongs to the UPF0319 family.

The sequence is that of UPF0319 protein VPA1584 from Vibrio parahaemolyticus serotype O3:K6 (strain RIMD 2210633).